Here is a 28-residue protein sequence, read N- to C-terminus: Cyclotide ltri-A (28 aa).

The segment at residues 1-28 (GVACGESCVYLPCFTVGCTCTSSQCFKN) is a cross-link (cyclopeptide (Gly-Asn)). Cystine bridges form between Cys4–Cys18, Cys8–Cys20, and Cys13–Cys25.

This sequence belongs to the cyclotide family. Bracelet subfamily. In terms of processing, this is a cyclic peptide.

Functionally, probably participates in a plant defense mechanism. The sequence is that of Cyclotide ltri-A from Leonia triandra.